The sequence spans 235 residues: Leucyl/phenylalanyl-tRNA--protein transferase (235 aa).

Belongs to the L/F-transferase family.

It is found in the cytoplasm. The catalysed reaction is N-terminal L-lysyl-[protein] + L-leucyl-tRNA(Leu) = N-terminal L-leucyl-L-lysyl-[protein] + tRNA(Leu) + H(+). The enzyme catalyses N-terminal L-arginyl-[protein] + L-leucyl-tRNA(Leu) = N-terminal L-leucyl-L-arginyl-[protein] + tRNA(Leu) + H(+). It catalyses the reaction L-phenylalanyl-tRNA(Phe) + an N-terminal L-alpha-aminoacyl-[protein] = an N-terminal L-phenylalanyl-L-alpha-aminoacyl-[protein] + tRNA(Phe). In terms of biological role, functions in the N-end rule pathway of protein degradation where it conjugates Leu, Phe and, less efficiently, Met from aminoacyl-tRNAs to the N-termini of proteins containing an N-terminal arginine or lysine. In Azoarcus sp. (strain BH72), this protein is Leucyl/phenylalanyl-tRNA--protein transferase.